Reading from the N-terminus, the 812-residue chain is Valine--tRNA ligase (812 aa).

Residues 46–56 (PTVSGQLHIGH) carry the 'HIGH' region motif. The short motif at 536–540 (KMSKS) is the 'KMSKS' region element. K539 is an ATP binding site.

Belongs to the class-I aminoacyl-tRNA synthetase family. ValS type 2 subfamily. In terms of assembly, monomer.

The protein localises to the cytoplasm. It catalyses the reaction tRNA(Val) + L-valine + ATP = L-valyl-tRNA(Val) + AMP + diphosphate. Functionally, catalyzes the attachment of valine to tRNA(Val). As ValRS can inadvertently accommodate and process structurally similar amino acids such as threonine, to avoid such errors, it has a 'posttransfer' editing activity that hydrolyzes mischarged Thr-tRNA(Val) in a tRNA-dependent manner. This Rickettsia conorii (strain ATCC VR-613 / Malish 7) protein is Valine--tRNA ligase.